The primary structure comprises 349 residues: Small ribosomal subunit protein uS2 (349 aa).

The tract at residues 302 to 334 (QNNYDPSKRGYNPKYVNHKSTFNKFNNKKPVDS) is disordered.

This sequence belongs to the universal ribosomal protein uS2 family.

The polypeptide is Small ribosomal subunit protein uS2 (Ureaplasma parvum serovar 3 (strain ATCC 27815 / 27 / NCTC 11736)).